The following is a 698-amino-acid chain: Methionine--tRNA ligase (698 aa).

Positions 18–28 (PYANGDLHVGH) match the 'HIGH' region motif. C149, C152, C161, and C165 together coordinate Zn(2+). ATP is bound at residue T350. A disordered region spans residues 567 to 590 (EAADAGDEEGEDEDEEPPAADLEP). Over residues 570-584 (DAGDEEGEDEDEEPP) the composition is skewed to acidic residues. The tRNA-binding domain maps to 600 to 698 (DFQDLDIRVA…EDAEPGTKVQ (99 aa)).

The protein belongs to the class-I aminoacyl-tRNA synthetase family. MetG type 1 subfamily. Homodimer. It depends on Zn(2+) as a cofactor.

Its subcellular location is the cytoplasm. It carries out the reaction tRNA(Met) + L-methionine + ATP = L-methionyl-tRNA(Met) + AMP + diphosphate. Functionally, is required not only for elongation of protein synthesis but also for the initiation of all mRNA translation through initiator tRNA(fMet) aminoacylation. The protein is Methionine--tRNA ligase of Natronomonas pharaonis (strain ATCC 35678 / DSM 2160 / CIP 103997 / JCM 8858 / NBRC 14720 / NCIMB 2260 / Gabara) (Halobacterium pharaonis).